The following is a 170-amino-acid chain: Small ribosomal subunit protein uS9 (170 aa).

Belongs to the universal ribosomal protein uS9 family.

The sequence is that of Small ribosomal subunit protein uS9 from Rhodococcus opacus (strain B4).